The primary structure comprises 163 residues: Ribonuclease H (163 aa).

The RNase H type-1 domain occupies 16 to 157; sequence TTSPVEIYCD…CDSLARQAIT (142 aa). Asp25, Glu63, Asp85, and Asp149 together coordinate Mg(2+).

The protein belongs to the RNase H family. Monomer. It depends on Mg(2+) as a cofactor.

It is found in the cytoplasm. It catalyses the reaction Endonucleolytic cleavage to 5'-phosphomonoester.. Endonuclease that specifically degrades the RNA of RNA-DNA hybrids. The polypeptide is Ribonuclease H (Pelobacter propionicus (strain DSM 2379 / NBRC 103807 / OttBd1)).